The primary structure comprises 1979 residues: E3 ubiquitin-protein ligase TTC3 (1979 aa).

The segment at 1–230 (MDDFAEGGLS…RHSCMQCVKQ (230 aa)) is interaction with POLG. TPR repeat units follow at residues 231-264 (GELMKMRGNEEFSKEKFEIAVIYYTRAIEYRPEN) and 266-298 (LLYGNRALCFLRMGQFRNALSDGKRAIVLKNTW). Position 378 is a phosphoserine (Ser378). Positions 422–457 (CDCHPEFLPPPSQPPRHKGKQKSRNNESEKPSFNSE) are disordered. 2 TPR repeats span residues 536 to 572 (VLVVYGLAVSLLGIGRPEELSEAENQFKRIIEHYPNE) and 576 to 609 (CLAYCGIGKVYLKKNRFLEALNHFEKAKTLISRL). A disordered region spans residues 783–811 (LAQERMEEDLRESNPPKNEEPEETSDSAQ). Ser1009 carries the phosphoserine modification. 7 disordered regions span residues 1021–1067 (NKGK…GPFA), 1214–1289 (QPDV…EEAK), 1402–1427 (QGSAADADPALSEPEGNSEHSGSSDS), 1574–1601 (KNDGFDKECEPHPDQSLGFSSALTDEKT), 1757–1776 (MDSASGCPEEVPELSLGSPT), 1788–1821 (KGASQVSPSEQSPEADEKLSGQATRSSQSPKKPS), and 1873–1927 (DEQK…PAPD). Over residues 1036–1050 (VGSGAASVAPSSEAV) the composition is skewed to low complexity. Ser1060 carries the phosphoserine modification. The segment covering 1214-1227 (QPDVKSEALSEDVK) has biased composition (basic and acidic residues). Low complexity predominate over residues 1248–1257 (DSDSSSGSAS). The segment covering 1576 to 1586 (DGFDKECEPHP) has biased composition (basic and acidic residues). Polar residues-rich tracts occupy residues 1788–1799 (KGASQVSPSEQS) and 1808–1821 (GQATRSSQSPKKPS). The residue at position 1794 (Ser1794) is a Phosphoserine. Residues 1873-1890 (DEQKKKKPNPGKDKKTSE) show a composition bias toward basic and acidic residues. The segment at 1931-1971 (CEICHEIFKSKNMRVLKCGHKFHKGCFKQWLKGQSTCPTCG) adopts an RING-type; atypical zinc-finger fold.

As to quaternary structure, interacts (when phosphorylated on Ser-378) with AKT1, AKT2 and AKT3 (when phosphorylated). Interacts with CIT. Interacts with POLG. Interacts with HSP70. Interacts with SMURF2. Phosphorylation on Ser-378 by Akt is required for ubiquitin ligase activity. In terms of processing, proteolytically cleaved into differently sized N- and C-terminal fragments.

The protein localises to the nucleus. Its subcellular location is the cytoplasm. It localises to the golgi apparatus. It carries out the reaction S-ubiquitinyl-[E2 ubiquitin-conjugating enzyme]-L-cysteine + [acceptor protein]-L-lysine = [E2 ubiquitin-conjugating enzyme]-L-cysteine + N(6)-ubiquitinyl-[acceptor protein]-L-lysine.. The protein operates within protein modification; protein ubiquitination. Functionally, E3 ubiquitin-protein ligase which catalyzes the formation of 'Lys-48'-polyubiquitin chains. Mediates the ubiquitination and subsequent degradation of phosphorylated Akt (AKT1, AKT2 and AKT3) in the nucleus. Acts as a terminal regulator of Akt signaling after activation; its phosphorylation by Akt, which is a prerequisite for ubiquitin ligase activity, suggests the existence of a regulation mechanism required to control Akt levels after activation. Positively regulates TGFB1-induced epithelial-mesenchymal transition and myofibroblast differentiation by mediating the ubiquitination and subsequent degradation of SMURF2. Regulates neuronal differentiation by regulating actin remodeling and Golgi organization via a signaling cascade involving RHOA, CIT and ROCK. Inhibits cell proliferation. This is E3 ubiquitin-protein ligase TTC3 (Ttc3) from Mus musculus (Mouse).